A 111-amino-acid polypeptide reads, in one-letter code: Large ribosomal subunit protein uL23 (111 aa).

It belongs to the universal ribosomal protein uL23 family. As to quaternary structure, part of the 50S ribosomal subunit. Contacts protein L29, and trigger factor when it is bound to the ribosome.

One of the early assembly proteins it binds 23S rRNA. One of the proteins that surrounds the polypeptide exit tunnel on the outside of the ribosome. Forms the main docking site for trigger factor binding to the ribosome. The protein is Large ribosomal subunit protein uL23 of Chlamydia caviae (strain ATCC VR-813 / DSM 19441 / 03DC25 / GPIC) (Chlamydophila caviae).